Consider the following 368-residue polypeptide: Phosphate acyltransferase (368 aa).

The tract at residues 337–368 (LEQAARDASGAGQASPIAGQPAEPYAAQSSKA) is disordered.

This sequence belongs to the PlsX family. Homodimer. Probably interacts with PlsY.

The protein resides in the cytoplasm. It carries out the reaction a fatty acyl-[ACP] + phosphate = an acyl phosphate + holo-[ACP]. It participates in lipid metabolism; phospholipid metabolism. Its function is as follows. Catalyzes the reversible formation of acyl-phosphate (acyl-PO(4)) from acyl-[acyl-carrier-protein] (acyl-ACP). This enzyme utilizes acyl-ACP as fatty acyl donor, but not acyl-CoA. This is Phosphate acyltransferase from Paraburkholderia phytofirmans (strain DSM 17436 / LMG 22146 / PsJN) (Burkholderia phytofirmans).